A 126-amino-acid chain; its full sequence is Fluoride-specific ion channel FluC (126 aa).

4 consecutive transmembrane segments (helical) span residues Leu4–Trp24, Gly36–Leu56, Leu67–Tyr85, and Ala101–Val121. Positions 75 and 78 each coordinate Na(+).

Belongs to the fluoride channel Fluc/FEX (TC 1.A.43) family.

It localises to the cell inner membrane. The catalysed reaction is fluoride(in) = fluoride(out). Its activity is regulated as follows. Na(+) is not transported, but it plays an essential structural role and its presence is essential for fluoride channel function. Functionally, fluoride-specific ion channel. Important for reducing fluoride concentration in the cell, thus reducing its toxicity. This chain is Fluoride-specific ion channel FluC, found in Anaeromyxobacter dehalogenans (strain 2CP-1 / ATCC BAA-258).